A 64-amino-acid chain; its full sequence is Small, acid-soluble spore protein beta (64 aa).

The protein belongs to the alpha/beta-type SASP family.

Functionally, SASP are bound to spore DNA. They are double-stranded DNA-binding proteins that cause DNA to change to an a-like conformation. They protect the DNA backbone from chemical and enzymatic cleavage and are thus involved in dormant spore's high resistance to UV light. The protein is Small, acid-soluble spore protein beta of Paraclostridium bifermentans (Clostridium bifermentans).